The chain runs to 396 residues: MKEIKGTIASPKGFLADAVHAQLKYKNLDLGLILSQVPAAIAGVFTTNKVCAAPVLIDRQIVKKGQARAIICNSAVANAVTGEQGYANALKTQKLLAEKFELKAEEVAVCSTGVIGVQLPMEKIATGISKLSQNEGTAAYFAKAILTTDTQTKTINFEAEIGGQIVNMAGVCKGSGMIHPNMATMLAFITTDAKIAQALLQKTLSEIIETTFNQITVDGDTSTNDTVLLMANGQAKNNEILEGSSDYLLFKEMLAKVCQSLAKQIAADGEGATKLIEVTVKGAPNDLTARFIAKKIVGSSLVKTAIFGADPNWGRIISSIGQVANFEVSDIELKLQDELVLYHSTPVDFDAAFLSEKLKEDKIEIIADLNAGSGLGQAWGCDLTYKYVEINALYTS.

The substrate site is built by Thr-147, Lys-173, Thr-184, Glu-270, Asn-391, and Ser-396. Catalysis depends on Thr-184, which acts as the Nucleophile.

This sequence belongs to the ArgJ family. Heterotetramer of two alpha and two beta chains.

The protein localises to the cytoplasm. The enzyme catalyses N(2)-acetyl-L-ornithine + L-glutamate = N-acetyl-L-glutamate + L-ornithine. The catalysed reaction is L-glutamate + acetyl-CoA = N-acetyl-L-glutamate + CoA + H(+). The protein operates within amino-acid biosynthesis; L-arginine biosynthesis; L-ornithine and N-acetyl-L-glutamate from L-glutamate and N(2)-acetyl-L-ornithine (cyclic): step 1/1. It participates in amino-acid biosynthesis; L-arginine biosynthesis; N(2)-acetyl-L-ornithine from L-glutamate: step 1/4. In terms of biological role, catalyzes two activities which are involved in the cyclic version of arginine biosynthesis: the synthesis of N-acetylglutamate from glutamate and acetyl-CoA as the acetyl donor, and of ornithine by transacetylation between N(2)-acetylornithine and glutamate. The polypeptide is Arginine biosynthesis bifunctional protein ArgJ (Lactococcus lactis subsp. lactis (strain IL1403) (Streptococcus lactis)).